A 348-amino-acid chain; its full sequence is GMP reductase (348 aa).

Residue 108–131 (ADFQKTKDIMALSDELIFICVDIA) participates in NADP(+) binding. Glycine 181 and glycine 183 together coordinate K(+). Residue cysteine 186 is the Thioimidate intermediate of the active site. 216 to 239 (IIGDGGCSCAGDVSKAFGGGADFV) is an NADP(+) binding site.

Belongs to the IMPDH/GMPR family. GuaC type 1 subfamily. In terms of assembly, homotetramer.

The enzyme catalyses IMP + NH4(+) + NADP(+) = GMP + NADPH + 2 H(+). Its function is as follows. Catalyzes the irreversible NADPH-dependent deamination of GMP to IMP. It functions in the conversion of nucleobase, nucleoside and nucleotide derivatives of G to A nucleotides, and in maintaining the intracellular balance of A and G nucleotides. The protein is GMP reductase of Vibrio parahaemolyticus serotype O3:K6 (strain RIMD 2210633).